Reading from the N-terminus, the 522-residue chain is Cytochrome P450 9c1 (522 aa).

Heme is bound at residue C464.

This sequence belongs to the cytochrome P450 family. Requires heme as cofactor.

The protein resides in the endoplasmic reticulum membrane. The protein localises to the microsome membrane. Functionally, may be involved in the metabolism of insect hormones and in the breakdown of synthetic insecticides. The chain is Cytochrome P450 9c1 (Cyp9c1) from Drosophila melanogaster (Fruit fly).